The chain runs to 229 residues: uncharacterized protein (229 aa).

In terms of domain architecture, PilZ spans 102–217 (RRRTVRVEPD…REKVRRYVFE (116 aa)).

This sequence to A.aeolicus aq_820 and aq_1211.

This is an uncharacterized protein from Aquifex aeolicus (strain VF5).